The following is an 860-amino-acid chain: DNA mismatch repair protein MutS (860 aa).

Position 607 to 614 (607 to 614 (GPNMSGKS)) interacts with ATP.

Belongs to the DNA mismatch repair MutS family.

This protein is involved in the repair of mismatches in DNA. It is possible that it carries out the mismatch recognition step. This protein has a weak ATPase activity. In Listeria monocytogenes serotype 4b (strain CLIP80459), this protein is DNA mismatch repair protein MutS.